The following is a 158-amino-acid chain: Transcription elongation factor GreA (158 aa).

Residues 3–75 (TEKTYPMTQE…TQLENMIRNA (73 aa)) are a coiled coil.

It belongs to the GreA/GreB family.

In terms of biological role, necessary for efficient RNA polymerase transcription elongation past template-encoded arresting sites. The arresting sites in DNA have the property of trapping a certain fraction of elongating RNA polymerases that pass through, resulting in locked ternary complexes. Cleavage of the nascent transcript by cleavage factors such as GreA or GreB allows the resumption of elongation from the new 3'terminus. GreA releases sequences of 2 to 3 nucleotides. The chain is Transcription elongation factor GreA from Bacillus cereus (strain ATCC 14579 / DSM 31 / CCUG 7414 / JCM 2152 / NBRC 15305 / NCIMB 9373 / NCTC 2599 / NRRL B-3711).